Reading from the N-terminus, the 608-residue chain is MFNRTTQLKSKHPCSVCTRRKVKCDRMIPCGNCRKRGQDSECMKSTKLITASSSKEYLPDLLLFWQNYEYWITNIGLYKTKQRDLTRTPANLDTDTEECMFWMNYLQKDQSFQLMNFAMENLGALYFGSIGDISELYLRVEQYWDRRADKNHSVDGKYWDALIWSVFTMCIYYMPVEKLAEIFSVYPLHEYLGSNKRLNWEDGMQLVMCQNFARCSLFQLKQCDFMAHPDIRLVQAYLILATTTFPYDEPLLANSLLTQCIHTFKNFHVDDFRPLLNDDPVESIAKVTLGRIFYRLCGCDYLQSGPRKPIALHTEVSSLLQHAAYLQDLPNVDVYREENSTEVLYWKIISLDRDLDQYLNKSSKPPLKTLDAIRRELDIFQYKVDSLEEDFRSNNSRFQKFIALFQISTVSWKLFKMYLIYYDTADSLLKVIHYSKVIISLIVNNFHAKSEFFNRHPMVMQTITRVVSFISFYQIFVESAAVKQLLVDLTELTANLPTIFGSKLDKLVYLTERLSKLKLLWDKVQLLDSGDSFYHPVFKILQNDIKIIELKNDEMFSLIKGLGSLVPLNKLRQESLLEEEDENNTEPSDFRTIVEEFQSEYNISDILS.

Positions 14 to 42 (CSVCTRRKVKCDRMIPCGNCRKRGQDSEC) form a DNA-binding region, zn(2)-C6 fungal-type. Residue S575 is modified to Phosphoserine.

In terms of assembly, component of the CBF3 copmplex, which is formed of CBF3A/CBF2, CBF3B/CEP3, CBF3C/CTF13 and CBF3D.

The protein resides in the nucleus. It is found in the chromosome. The protein localises to the centromere. Acts as a component of the centromere DNA-binding protein complex CBF3, which is essential for chromosome segregation and movement of centromeres along microtubules. CBF3 is required for the recruitment of other kinetochore complexes to CEN DNA. It plays a role in the attachment of chromosomes to the spindle and binds selectively to a highly conserved DNA sequence called CDEIII, found in centromers and in several promoters. The protein is Centromere DNA-binding protein complex CBF3 subunit B (CEP3) of Saccharomyces cerevisiae (strain ATCC 204508 / S288c) (Baker's yeast).